The primary structure comprises 276 residues: Formamidopyrimidine-DNA glycosylase (276 aa).

The active-site Schiff-base intermediate with DNA is the Pro2. Residue Glu3 is the Proton donor of the active site. Lys58 acts as the Proton donor; for beta-elimination activity in catalysis. Residues His94, Arg112, and Arg157 each contribute to the DNA site. The segment at 242–276 (FVYDRAGEPCRVCGAPIRQIVQGQRSTYFCPNCQR) adopts an FPG-type zinc-finger fold. The active-site Proton donor; for delta-elimination activity is the Arg266.

This sequence belongs to the FPG family. In terms of assembly, monomer. It depends on Zn(2+) as a cofactor.

The enzyme catalyses Hydrolysis of DNA containing ring-opened 7-methylguanine residues, releasing 2,6-diamino-4-hydroxy-5-(N-methyl)formamidopyrimidine.. It carries out the reaction 2'-deoxyribonucleotide-(2'-deoxyribose 5'-phosphate)-2'-deoxyribonucleotide-DNA = a 3'-end 2'-deoxyribonucleotide-(2,3-dehydro-2,3-deoxyribose 5'-phosphate)-DNA + a 5'-end 5'-phospho-2'-deoxyribonucleoside-DNA + H(+). In terms of biological role, involved in base excision repair of DNA damaged by oxidation or by mutagenic agents. Acts as a DNA glycosylase that recognizes and removes damaged bases. Has a preference for oxidized purines, such as 7,8-dihydro-8-oxoguanine (8-oxoG). Has AP (apurinic/apyrimidinic) lyase activity and introduces nicks in the DNA strand. Cleaves the DNA backbone by beta-delta elimination to generate a single-strand break at the site of the removed base with both 3'- and 5'-phosphates. This chain is Formamidopyrimidine-DNA glycosylase, found in Burkholderia pseudomallei (strain 1710b).